A 128-amino-acid polypeptide reads, in one-letter code: Probable 4-amino-4-deoxy-L-arabinose-phosphoundecaprenol flippase subunit ArnF (128 aa).

Residues 1-21 (MGLMWGLFSVIIASAAQLSLG) traverse the membrane as a helical segment. At 22–35 (YAASHLPPMTQFWD) the chain is on the periplasmic side. Residues 36 to 56 (FIAAFFAFGPGARMLVVGLVG) traverse the membrane as a helical segment. The Cytoplasmic portion of the chain corresponds to 57 to 76 (YLLSVFCWYKALHQLALSKA). The chain crosses the membrane as a helical span at residues 77–97 (YALLSMSYVLVWIASMVLPGW). Residues 98 to 100 (EGT) lie on the Periplasmic side of the membrane. A helical transmembrane segment spans residues 101–121 (FSLKALLGVACIMSGLMLIFL). Over 122-128 (PTTKQRY) the chain is Cytoplasmic.

It belongs to the ArnF family. As to quaternary structure, heterodimer of ArnE and ArnF.

Its subcellular location is the cell inner membrane. It participates in bacterial outer membrane biogenesis; lipopolysaccharide biosynthesis. Its function is as follows. Translocates 4-amino-4-deoxy-L-arabinose-phosphoundecaprenol (alpha-L-Ara4N-phosphoundecaprenol) from the cytoplasmic to the periplasmic side of the inner membrane. The protein is Probable 4-amino-4-deoxy-L-arabinose-phosphoundecaprenol flippase subunit ArnF of Escherichia fergusonii (strain ATCC 35469 / DSM 13698 / CCUG 18766 / IAM 14443 / JCM 21226 / LMG 7866 / NBRC 102419 / NCTC 12128 / CDC 0568-73).